A 334-amino-acid chain; its full sequence is Mevalonate kinase (334 aa).

Residue 110 to 120 (PVGAGLGSSAA) coordinates ATP. The Proton acceptor role is filled by aspartate 161.

Belongs to the GHMP kinase family. Mevalonate kinase subfamily. In terms of assembly, homodimer. Mg(2+) serves as cofactor.

The protein localises to the cytoplasm. The catalysed reaction is (R)-mevalonate + ATP = (R)-5-phosphomevalonate + ADP + H(+). It participates in isoprenoid biosynthesis; isopentenyl diphosphate biosynthesis via mevalonate pathway; isopentenyl diphosphate from (R)-mevalonate: step 1/3. Its function is as follows. Catalyzes the phosphorylation of (R)-mevalonate (MVA) to (R)-mevalonate 5-phosphate (MVAP). Functions in the mevalonate (MVA) pathway leading to isopentenyl diphosphate (IPP), a key precursor for the biosynthesis of isoprenoid compounds such as archaeal membrane lipids. The sequence is that of Mevalonate kinase from Thermococcus gammatolerans (strain DSM 15229 / JCM 11827 / EJ3).